The primary structure comprises 459 residues: MDTIAAISTPMGEGAIAIIRLSGPEAVQIADRMYKGPKEKKLVSVDSHTIHYGHIVDARTDQVIEEVMVSVLRAPKTFTREDVIEINCHGGIVTVNKVLQLALREGARLAEPGEFTKRAFLNGRIDLSQAEAVMDLIRAKTDRAMNVAITQMEGRLSGLVQRLRGEILETLAHIEVNIDYPEYDDVEEMTHRVLVEKATSVKKEIESLLSTSHQGKILREGLSTVIIGRPNVGKSSLLNSLVQETKAIVTDIPGTTRDVIEEYVNVRGVPLRLVDTAGIRETEDIVERIGVERSRQVLKEADLILLVLNYSEELSEEDIKLFEAVSGMDIIVIVNKTDLEPKLDVEKVKQLAKDRPVVTTSLLQEKGIDELEMAIQSLFFTGSIESGDLTYVSNTRHIALLQAAKQSIEDALEGIEMDVPIDIVQIDLTRCWEQLGEIIGDAVHESLIDQLFSQFCLGK.

Residues Arg-20, Glu-85, and Arg-124 each contribute to the (6S)-5-formyl-5,6,7,8-tetrahydrofolate site. Residues 221-380 (GLSTVIIGRP…LEMAIQSLFF (160 aa)) form the TrmE-type G domain. Asn-231 serves as a coordination point for K(+). Residues 231–236 (NVGKSS), 250–256 (TDIPGTT), and 275–278 (DTAG) each bind GTP. Ser-235 provides a ligand contact to Mg(2+). K(+) is bound by residues Thr-250, Ile-252, and Thr-255. Thr-256 is a Mg(2+) binding site. Lys-459 is a binding site for (6S)-5-formyl-5,6,7,8-tetrahydrofolate.

Belongs to the TRAFAC class TrmE-Era-EngA-EngB-Septin-like GTPase superfamily. TrmE GTPase family. Homodimer. Heterotetramer of two MnmE and two MnmG subunits. K(+) serves as cofactor.

It localises to the cytoplasm. Exhibits a very high intrinsic GTPase hydrolysis rate. Involved in the addition of a carboxymethylaminomethyl (cmnm) group at the wobble position (U34) of certain tRNAs, forming tRNA-cmnm(5)s(2)U34. The chain is tRNA modification GTPase MnmE from Bacillus pumilus (strain SAFR-032).